The sequence spans 56 residues: Ovomucoid (56 aa).

A Kazal-like domain is found at 6-56 (VDCSEYPKPDCTLEYRPLCGSDNKTYANKCNFCNAVVESNGTLTLSHFGKC). Disulfide bonds link Cys-8–Cys-38, Cys-16–Cys-35, and Cys-24–Cys-56. Residue Asn-45 is glycosylated (N-linked (GlcNAc...) asparagine).

It is found in the secreted. The sequence is that of Ovomucoid from Callipepla squamata castanogastris (Chestnut bellied scaled quail).